A 290-amino-acid chain; its full sequence is Release factor glutamine methyltransferase (290 aa).

The S-adenosyl-L-methionine site is built by aspartate 140 and asparagine 181. 181–184 (NPPY) contributes to the substrate binding site.

Belongs to the protein N5-glutamine methyltransferase family. PrmC subfamily.

It carries out the reaction L-glutaminyl-[peptide chain release factor] + S-adenosyl-L-methionine = N(5)-methyl-L-glutaminyl-[peptide chain release factor] + S-adenosyl-L-homocysteine + H(+). Its function is as follows. Methylates the class 1 translation termination release factors RF1/PrfA and RF2/PrfB on the glutamine residue of the universally conserved GGQ motif. In Chlamydia trachomatis serovar D (strain ATCC VR-885 / DSM 19411 / UW-3/Cx), this protein is Release factor glutamine methyltransferase.